We begin with the raw amino-acid sequence, 523 residues long: Probable E3 ubiquitin-protein ligase ZFP1 (523 aa).

Basic and acidic residues predominate over residues 18-28 (EQGHSHIHSES). Positions 18–43 (EQGHSHIHSESFNRTGNDSSDQGAQH) are disordered. The span at 29–40 (FNRTGNDSSDQG) shows a compositional bias: polar residues. The RING-type; atypical zinc-finger motif lies at 471–512 (CIICQEEYQVKECIGTLDCGHRYHEDCIKQWLMVKNLCPICK).

This sequence belongs to the RING-type zinc finger family. In terms of assembly, interacts with DJA6.

It catalyses the reaction S-ubiquitinyl-[E2 ubiquitin-conjugating enzyme]-L-cysteine + [acceptor protein]-L-lysine = [E2 ubiquitin-conjugating enzyme]-L-cysteine + N(6)-ubiquitinyl-[acceptor protein]-L-lysine.. It participates in protein modification; protein ubiquitination. Probable E3 ubiquitin-protein ligase. In Oryza sativa subsp. japonica (Rice), this protein is Probable E3 ubiquitin-protein ligase ZFP1.